We begin with the raw amino-acid sequence, 366 residues long: tRNA(Met) cytidine acetate ligase (366 aa).

ATP-binding positions include 7 to 20, Gly-96, Asn-152, and Arg-175; that span reads IAEF…HQYL.

The protein belongs to the TmcAL family.

Its subcellular location is the cytoplasm. The catalysed reaction is cytidine(34) in elongator tRNA(Met) + acetate + ATP = N(4)-acetylcytidine(34) in elongator tRNA(Met) + AMP + diphosphate. Functionally, catalyzes the formation of N(4)-acetylcytidine (ac(4)C) at the wobble position of elongator tRNA(Met), using acetate and ATP as substrates. First activates an acetate ion to form acetyladenylate (Ac-AMP) and then transfers the acetyl group to tRNA to form ac(4)C34. In Streptococcus equi subsp. zooepidemicus (strain H70), this protein is tRNA(Met) cytidine acetate ligase.